Reading from the N-terminus, the 510-residue chain is 2,3-bisphosphoglycerate-independent phosphoglycerate mutase (510 aa).

2 residues coordinate Mn(2+): Asp-12 and Ser-62. Ser-62 functions as the Phosphoserine intermediate in the catalytic mechanism. Residues His-123, 153–154 (RD), Arg-185, Arg-191, 260–263 (RPDR), and Lys-335 contribute to the substrate site. Positions 402, 406, 443, 444, and 461 each coordinate Mn(2+).

The protein belongs to the BPG-independent phosphoglycerate mutase family. As to quaternary structure, monomer. It depends on Mn(2+) as a cofactor.

It catalyses the reaction (2R)-2-phosphoglycerate = (2R)-3-phosphoglycerate. It functions in the pathway carbohydrate degradation; glycolysis; pyruvate from D-glyceraldehyde 3-phosphate: step 3/5. Its function is as follows. Catalyzes the interconversion of 2-phosphoglycerate and 3-phosphoglycerate. The sequence is that of 2,3-bisphosphoglycerate-independent phosphoglycerate mutase from Listeria monocytogenes serovar 1/2a (strain ATCC BAA-679 / EGD-e).